The chain runs to 129 residues: Small ribosomal subunit protein uS11 (129 aa).

The protein belongs to the universal ribosomal protein uS11 family. As to quaternary structure, part of the 30S ribosomal subunit. Interacts with proteins S7 and S18. Binds to IF-3.

In terms of biological role, located on the platform of the 30S subunit, it bridges several disparate RNA helices of the 16S rRNA. Forms part of the Shine-Dalgarno cleft in the 70S ribosome. The sequence is that of Small ribosomal subunit protein uS11 from Dinoroseobacter shibae (strain DSM 16493 / NCIMB 14021 / DFL 12).